The chain runs to 379 residues: Protein FAM53B (379 aa).

Disordered regions lie at residues 206–257 (CPAE…HKQR) and 302–348 (AQND…AGKE). Residues 212-236 (SPESTPELQRRSGQSGLARSRSQPC) show a composition bias toward polar residues. Residues 239–249 (NHQKIGVKRRR) are compositionally biased toward basic residues. A Nuclear localization signal motif is present at residues 246–249 (KRRR). Residues 326–342 (QSDSSSADALIHQSESS) are compositionally biased toward polar residues.

Belongs to the FAM53 family. As to quaternary structure, interacts with ctnnb1. As to expression, mainly expressed in proliferating tissues.

The protein resides in the nucleus. Functionally, acts as a regulator of Wnt signaling pathway by regulating beta-catenin (ctnnb1) nuclear localization. Required for appendage regeneration by regulating cell proliferation. The protein is Protein FAM53B of Danio rerio (Zebrafish).